The sequence spans 555 residues: GPI-anchor transamidase component PIGS (555 aa).

Over 2-18 (AATGAAATDLEVVRGKR) the chain is Cytoplasmic. A cardiolipin-binding residues include R15 and R18. The chain crosses the membrane as a helical span at residues 19 to 39 (AALFFATVVIVLGLPLWWKTT). Residues 40–517 (ETYRAPLPYS…LHLLYFPDDQ (478 aa)) are Lumenal-facing. 2 N-linked (GlcNAc...) asparagine glycosylation sites follow: N267 and N370. The helical transmembrane segment at 518-532 (KFAIYIPLFLPMAVP) threads the bilayer. Residues 533–555 (ILLSLFKIFLETRKSWKKPEKTD) lie on the Cytoplasmic side of the membrane.

Belongs to the PIGS family. In terms of assembly, heteropentamer. Part of the GPI-anchor transamidase complex, consisting of PIGK, PIGT, PIGS, PIGU and GAA1.

The protein localises to the endoplasmic reticulum membrane. Its pathway is glycolipid biosynthesis; glycosylphosphatidylinositol-anchor biosynthesis. Its function is as follows. Component of the glycosylphosphatidylinositol-anchor (GPI-anchor) transamidase (GPI-T) complex that catalyzes the formation of the linkage between a proprotein and a GPI-anchor and participates in GPI anchored protein biosynthesis. This Bos taurus (Bovine) protein is GPI-anchor transamidase component PIGS.